Here is a 261-residue protein sequence, read N- to C-terminus: Cytochrome c oxidase subunit 3 (261 aa).

The Mitochondrial matrix segment spans residues M1–P15. A helical membrane pass occupies residues W16–W34. The Mitochondrial intermembrane segment spans residues F35–L40. A helical membrane pass occupies residues T41–T66. Over F67 to T72 the chain is Mitochondrial matrix. A helical membrane pass occupies residues P73–S105. Over L106–E128 the chain is Mitochondrial intermembrane. The chain crosses the membrane as a helical span at residues V129–M152. Topologically, residues E153–K155 are mitochondrial matrix. The chain crosses the membrane as a helical span at residues R156–E183. Over A184–D190 the chain is Mitochondrial intermembrane. The helical transmembrane segment at G191–I223 threads the bilayer. The Mitochondrial matrix segment spans residues L224–H232. The helical transmembrane segment at F233–I256 threads the bilayer. The Mitochondrial intermembrane portion of the chain corresponds to Y257–S261.

It belongs to the cytochrome c oxidase subunit 3 family. Component of the cytochrome c oxidase (complex IV, CIV), a multisubunit enzyme composed of 14 subunits. The complex is composed of a catalytic core of 3 subunits MT-CO1, MT-CO2 and MT-CO3, encoded in the mitochondrial DNA, and 11 supernumerary subunits COX4I, COX5A, COX5B, COX6A, COX6B, COX6C, COX7A, COX7B, COX7C, COX8 and NDUFA4, which are encoded in the nuclear genome. The complex exists as a monomer or a dimer and forms supercomplexes (SCs) in the inner mitochondrial membrane with NADH-ubiquinone oxidoreductase (complex I, CI) and ubiquinol-cytochrome c oxidoreductase (cytochrome b-c1 complex, complex III, CIII), resulting in different assemblies (supercomplex SCI(1)III(2)IV(1) and megacomplex MCI(2)III(2)IV(2)).

It localises to the mitochondrion inner membrane. The catalysed reaction is 4 Fe(II)-[cytochrome c] + O2 + 8 H(+)(in) = 4 Fe(III)-[cytochrome c] + 2 H2O + 4 H(+)(out). Its function is as follows. Component of the cytochrome c oxidase, the last enzyme in the mitochondrial electron transport chain which drives oxidative phosphorylation. The respiratory chain contains 3 multisubunit complexes succinate dehydrogenase (complex II, CII), ubiquinol-cytochrome c oxidoreductase (cytochrome b-c1 complex, complex III, CIII) and cytochrome c oxidase (complex IV, CIV), that cooperate to transfer electrons derived from NADH and succinate to molecular oxygen, creating an electrochemical gradient over the inner membrane that drives transmembrane transport and the ATP synthase. Cytochrome c oxidase is the component of the respiratory chain that catalyzes the reduction of oxygen to water. Electrons originating from reduced cytochrome c in the intermembrane space (IMS) are transferred via the dinuclear copper A center (CU(A)) of subunit 2 and heme A of subunit 1 to the active site in subunit 1, a binuclear center (BNC) formed by heme A3 and copper B (CU(B)). The BNC reduces molecular oxygen to 2 water molecules using 4 electrons from cytochrome c in the IMS and 4 protons from the mitochondrial matrix. The polypeptide is Cytochrome c oxidase subunit 3 (mt-co3) (Polypterus ornatipinnis (Ornate bichir)).